A 352-amino-acid polypeptide reads, in one-letter code: MNVDSRVFRFFLVFLILVVVASPGCVDNQPEPGNTSAGEGEVLTVFHAGSLSVPFEELEAEFEAQHPGVDVQREAAGSAQSVRKITELGKKADVLASADYALIPSLMVPEYADWYAAFARNQMILAYTNESKYGDEINTDNWYEILRRPDVRYGFSNPNDDPAGYRSQMVTQLAESYYNDDMIYDDLMLANTGMTLTTEENGTALIHVPASEEISPNTSKIMLRSMEVELSSALETGEIDYLYIYRSVAEQHGFEYVALPPAIDLSSLEYADNYSKVQVEMVNGEVVTGSPIVYGVTIPNNAENSELATEFVALLLGETGQQIFIENGQPPIVPAIAEGKDSMPEELQALVV.

An N-terminal signal peptide occupies residues 1 to 21; that stretch reads MNVDSRVFRFFLVFLILVVVA.

It belongs to the bacterial solute-binding protein 1 family. WtpA subfamily.

This is an uncharacterized protein from Methanosarcina acetivorans (strain ATCC 35395 / DSM 2834 / JCM 12185 / C2A).